Here is a 107-residue protein sequence, read N- to C-terminus: MGNRQSSAQLNSHLTHINSQNSNLFISDSKTAVFHTQHILLAAGVGIIATLLVLLLCSCVLNCYLCRRLKRTNGVSSLLERNLRQNGSSAKIYVKPVMQSSTIIEEA.

The helical transmembrane segment at 39–59 (ILLAAGVGIIATLLVLLLCSC) threads the bilayer.

The protein belongs to the rotavirus B NSP1-1 family.

Its subcellular location is the host membrane. In Homo sapiens (Human), this protein is Non-structural protein 1, peptide 1.